Here is a 147-residue protein sequence, read N- to C-terminus: Large ribosomal subunit protein bL21 (147 aa).

The disordered stretch occupies residues 115-147 (KSIKVGKPTPKSSSKKEETVKKETKPKSEKSTN). Positions 128–147 (SKKEETVKKETKPKSEKSTN) are enriched in basic and acidic residues.

The protein belongs to the bacterial ribosomal protein bL21 family. As to quaternary structure, part of the 50S ribosomal subunit. Contacts protein L20.

Functionally, this protein binds to 23S rRNA in the presence of protein L20. This chain is Large ribosomal subunit protein bL21, found in Prochlorococcus marinus (strain MIT 9215).